The chain runs to 427 residues: Enolase (427 aa).

Q163 is a (2R)-2-phosphoglycerate binding site. The Proton donor role is filled by E205. Residues D242, E285, and D312 each contribute to the Mg(2+) site. K337, R366, S367, and K388 together coordinate (2R)-2-phosphoglycerate. K337 functions as the Proton acceptor in the catalytic mechanism.

Belongs to the enolase family. Mg(2+) is required as a cofactor.

It is found in the cytoplasm. It localises to the secreted. The protein resides in the cell surface. It carries out the reaction (2R)-2-phosphoglycerate = phosphoenolpyruvate + H2O. It participates in carbohydrate degradation; glycolysis; pyruvate from D-glyceraldehyde 3-phosphate: step 4/5. In terms of biological role, catalyzes the reversible conversion of 2-phosphoglycerate (2-PG) into phosphoenolpyruvate (PEP). It is essential for the degradation of carbohydrates via glycolysis. The polypeptide is Enolase (Methylocella silvestris (strain DSM 15510 / CIP 108128 / LMG 27833 / NCIMB 13906 / BL2)).